Consider the following 475-residue polypeptide: Ribulose bisphosphate carboxylase large chain (475 aa).

Residues 1–2 (MS) constitute a propeptide that is removed on maturation. An N-acetylproline modification is found at Pro3. Position 14 is an N6,N6,N6-trimethyllysine (Lys14). Substrate is bound by residues Asn123 and Thr173. Lys175 acts as the Proton acceptor in catalysis. Lys177 contributes to the substrate binding site. The Mg(2+) site is built by Lys201, Asp203, and Glu204. At Lys201 the chain carries N6-carboxylysine. His294 acts as the Proton acceptor in catalysis. The substrate site is built by Arg295, His327, and Ser379.

The protein belongs to the RuBisCO large chain family. Type I subfamily. As to quaternary structure, heterohexadecamer of 8 large chains and 8 small chains; disulfide-linked. The disulfide link is formed within the large subunit homodimers. The cofactor is Mg(2+). The disulfide bond which can form in the large chain dimeric partners within the hexadecamer appears to be associated with oxidative stress and protein turnover.

It is found in the plastid. The protein localises to the chloroplast. The catalysed reaction is 2 (2R)-3-phosphoglycerate + 2 H(+) = D-ribulose 1,5-bisphosphate + CO2 + H2O. It carries out the reaction D-ribulose 1,5-bisphosphate + O2 = 2-phosphoglycolate + (2R)-3-phosphoglycerate + 2 H(+). RuBisCO catalyzes two reactions: the carboxylation of D-ribulose 1,5-bisphosphate, the primary event in carbon dioxide fixation, as well as the oxidative fragmentation of the pentose substrate in the photorespiration process. Both reactions occur simultaneously and in competition at the same active site. The protein is Ribulose bisphosphate carboxylase large chain of Fagopyrum esculentum subsp. ancestrale (Wild buckwheat).